The sequence spans 393 residues: MKRPVTGKDLMIVNMGPHHPSMHGVLRLIVTLDGEDVVDCEPILGYLHRGMEKIAENRAIIQYLPYVTRWDYLATMFTEAITVNGPEQLGNIQVPKRASYIRVIMLELSRIASHLLWLGPFMADIGAQTPFFYIFREREFIYDLFEAATGMRMMHNFFRIGGIAADLPYGWIDKCLDFCDYFLTEVVEYQKLITRNPIFLERVEGVGIIGGEEAINWGLSGPMLRASGIPWDLRKVDRYESYDEFEWEIQWQKQGDSLARYLVRLSEMTESIKIIQQALEGLPGGPYENLESRGFERKRNPEWNDFEYRFISKKPSPTFELSKQELYVRVEAPKGELGIFLIGDQSGFPWRWKIRPPGFINLQILPELVKRMKLADIMTILGSIDIIMGEVDR.

Belongs to the complex I 49 kDa subunit family. In terms of assembly, NDH is composed of at least 16 different subunits, 5 of which are encoded in the nucleus.

Its subcellular location is the plastid. The protein resides in the chloroplast thylakoid membrane. The enzyme catalyses a plastoquinone + NADH + (n+1) H(+)(in) = a plastoquinol + NAD(+) + n H(+)(out). It catalyses the reaction a plastoquinone + NADPH + (n+1) H(+)(in) = a plastoquinol + NADP(+) + n H(+)(out). Functionally, NDH shuttles electrons from NAD(P)H:plastoquinone, via FMN and iron-sulfur (Fe-S) centers, to quinones in the photosynthetic chain and possibly in a chloroplast respiratory chain. The immediate electron acceptor for the enzyme in this species is believed to be plastoquinone. Couples the redox reaction to proton translocation, and thus conserves the redox energy in a proton gradient. The chain is NAD(P)H-quinone oxidoreductase subunit H, chloroplastic from Crucihimalaya wallichii (Rock-cress).